We begin with the raw amino-acid sequence, 179 residues long: UPF0398 protein Bsph_0756 (179 aa).

The protein belongs to the UPF0398 family.

This chain is UPF0398 protein Bsph_0756, found in Lysinibacillus sphaericus (strain C3-41).